A 119-amino-acid polypeptide reads, in one-letter code: Ribosome-binding factor A (119 aa).

Belongs to the RbfA family. Monomer. Binds 30S ribosomal subunits, but not 50S ribosomal subunits or 70S ribosomes.

The protein localises to the cytoplasm. In terms of biological role, one of several proteins that assist in the late maturation steps of the functional core of the 30S ribosomal subunit. Associates with free 30S ribosomal subunits (but not with 30S subunits that are part of 70S ribosomes or polysomes). Required for efficient processing of 16S rRNA. May interact with the 5'-terminal helix region of 16S rRNA. The protein is Ribosome-binding factor A of Coxiella burnetii (strain CbuK_Q154) (Coxiella burnetii (strain Q154)).